A 618-amino-acid chain; its full sequence is DNA ligase 2 (618 aa).

The span at 197–208 (DKKTLESREDAK) shows a compositional bias: basic and acidic residues. Residues 197–250 (DKKTLESREDAKSVPPASQPEITNKISGDTSPNTSESVQTKKSDPDTSSNVDPS) are disordered. The span at 216-234 (PEITNKISGDTSPNTSESV) shows a compositional bias: polar residues. E312 is an ATP binding site. Catalysis depends on K314, which acts as the N6-AMP-lysine intermediate. Residues R319, R334, E363, F403, R476, and K482 each contribute to the ATP site. Residues 459–480 (HEGVMLKDPDSTYNPGSRGQHW) are disordered.

The protein belongs to the ATP-dependent DNA ligase family. Requires Mg(2+) as cofactor.

The enzyme catalyses ATP + (deoxyribonucleotide)n-3'-hydroxyl + 5'-phospho-(deoxyribonucleotide)m = (deoxyribonucleotide)n+m + AMP + diphosphate.. DNA ligase that seals nicks in double-stranded DNA during DNA replication, DNA recombination and DNA repair. This Haloquadratum walsbyi (strain DSM 16790 / HBSQ001) protein is DNA ligase 2.